A 62-amino-acid polypeptide reads, in one-letter code: Photosystem II reaction center protein Z (62 aa).

The next 2 helical transmembrane spans lie at 8–28 and 41–61; these read TVLA…VIFA and FSGA…NSFV.

The protein belongs to the PsbZ family. PSII is composed of 1 copy each of membrane proteins PsbA, PsbB, PsbC, PsbD, PsbE, PsbF, PsbH, PsbI, PsbJ, PsbK, PsbL, PsbM, PsbT, PsbY, PsbZ, Psb30/Ycf12, at least 3 peripheral proteins of the oxygen-evolving complex and a large number of cofactors. It forms dimeric complexes.

Its subcellular location is the plastid. It localises to the chloroplast thylakoid membrane. In terms of biological role, may control the interaction of photosystem II (PSII) cores with the light-harvesting antenna, regulates electron flow through the 2 photosystem reaction centers. PSII is a light-driven water plastoquinone oxidoreductase, using light energy to abstract electrons from H(2)O, generating a proton gradient subsequently used for ATP formation. This chain is Photosystem II reaction center protein Z, found in Mesostigma viride (Green alga).